A 91-amino-acid chain; its full sequence is Small ribosomal subunit protein bS16 (91 aa).

This sequence belongs to the bacterial ribosomal protein bS16 family.

The chain is Small ribosomal subunit protein bS16 from Exiguobacterium sp. (strain ATCC BAA-1283 / AT1b).